The sequence spans 170 residues: ATP synthase F(1) complex subunit delta, mitochondrial (170 aa).

The N-terminal 33 residues, 1 to 33 (MIRSIIKSSNNLLKSNVAINSNKRFFATEASAT), are a transit peptide targeting the mitochondrion.

It belongs to the ATPase epsilon chain family. In terms of assembly, component of the ATP synthase complex composed at least of ATP5F1A/subunit alpha, ATP5F1B/subunit beta, ATP5MC1/subunit c (homooctomer), MT-ATP6/subunit a, MT-ATP8/subunit 8, ATP5ME/subunit e, ATP5MF/subunit f, ATP5MG/subunit g, ATP5MK/subunit k, ATP5MJ/subunit j, ATP5F1C/subunit gamma, ATP5F1D/subunit delta, ATP5F1E/subunit epsilon, ATP5PF/subunit F6, ATP5PB/subunit b, ATP5PD/subunit d, ATP5PO/subunit OSCP. ATP synthase complex consists of a soluble F(1) head domain (subunits alpha(3) and beta(3)) - the catalytic core - and a membrane F(0) domain - the membrane proton channel (subunits c, a, 8, e, f, g, k and j). These two domains are linked by a central stalk (subunits gamma, delta, and epsilon) rotating inside the F1 region and a stationary peripheral stalk (subunits F6, b, d, and OSCP).

Its subcellular location is the mitochondrion. It localises to the mitochondrion inner membrane. In terms of biological role, subunit delta, of the mitochondrial membrane ATP synthase complex (F(1)F(0) ATP synthase or Complex V) that produces ATP from ADP in the presence of a proton gradient across the membrane which is generated by electron transport complexes of the respiratory chain. ATP synthase complex consist of a soluble F(1) head domain - the catalytic core - and a membrane F(1) domain - the membrane proton channel. These two domains are linked by a central stalk rotating inside the F(1) region and a stationary peripheral stalk. During catalysis, ATP synthesis in the catalytic domain of F(1) is coupled via a rotary mechanism of the central stalk subunits to proton translocation. In vivo, can only synthesize ATP although its ATP hydrolase activity can be activated artificially in vitro. With the central stalk subunit gamma, is essential for the biogenesis of F(1) catalytic part of the ATP synthase complex namely in the formation of F1 assembly intermediate. This Dictyostelium discoideum (Social amoeba) protein is ATP synthase F(1) complex subunit delta, mitochondrial.